The sequence spans 287 residues: ATP synthase gamma chain (287 aa).

This sequence belongs to the ATPase gamma chain family. F-type ATPases have 2 components, CF(1) - the catalytic core - and CF(0) - the membrane proton channel. CF(1) has five subunits: alpha(3), beta(3), gamma(1), delta(1), epsilon(1). CF(0) has three main subunits: a, b and c.

It localises to the cell inner membrane. In terms of biological role, produces ATP from ADP in the presence of a proton gradient across the membrane. The gamma chain is believed to be important in regulating ATPase activity and the flow of protons through the CF(0) complex. This Citrobacter koseri (strain ATCC BAA-895 / CDC 4225-83 / SGSC4696) protein is ATP synthase gamma chain.